Consider the following 644-residue polypeptide: Phosphatidylinositol polyphosphate 5-phosphatase type IV (644 aa).

A disordered region spans residues 1–193 (MPSKAENLRP…RLPSLLPPRP (193 aa)). 8 repeat units span residues 10–13 (PSEP), 15–18 (PQPP), 28–31 (PGAP), 39–42 (PPDV), 55–58 (PATP), 69–71 (PIA), 72–74 (PRP), and 75–78 (PARP). The 13 X 4 AA repeats of P-X-X-P stretch occupies residues 10-242 (PSEPAPQPPE…SLGPGRPRSP (233 aa)). Residues 78 to 90 (PRLERALSLDDKG) are compositionally biased toward basic and acidic residues. Position 99 is a phosphoserine (Ser99). Residues 107 to 118 (NGTSPSRGSVQS) show a composition bias toward polar residues. Copy 9 of the repeat occupies 121–124 (PGAP). Over residues 152 to 163 (GSPSSGGNPLSG) the composition is skewed to low complexity. Tandem repeats lie at residues 169–172 (PNLP), 183–185 (PRL), 190–193 (PPRP), and 236–239 (PGRP). Phosphoserine is present on residues Ser241 and Ser256. Cys641 carries the cysteine methyl ester modification. The S-farnesyl cysteine moiety is linked to residue Cys641. Positions 642–644 (SVS) are cleaved as a propeptide — removed in mature form.

Belongs to the inositol polyphosphate 5-phosphatase family. As to quaternary structure, interacts (when prenylated) with PDE6D; this is important for normal location in cilia.

The protein resides in the cytoplasm. It localises to the cytoskeleton. It is found in the cilium axoneme. The protein localises to the golgi apparatus. Its subcellular location is the golgi stack membrane. The protein resides in the cell membrane. It localises to the cell projection. It is found in the ruffle. The protein localises to the nucleus. The catalysed reaction is a 1,2-diacyl-sn-glycero-3-phospho-(1D-myo-inositol-4,5-bisphosphate) + H2O = a 1,2-diacyl-sn-glycero-3-phospho-(1D-myo-inositol 4-phosphate) + phosphate. It catalyses the reaction a 1,2-diacyl-sn-glycero-3-phospho-(1D-myo-inositol-3,4,5-trisphosphate) + H2O = a 1,2-diacyl-sn-glycero-3-phospho-(1D-myo-inositol-3,4-bisphosphate) + phosphate. The enzyme catalyses a 1,2-diacyl-sn-glycero-3-phospho-(1D-myo-inositol-3,5-bisphosphate) + H2O = a 1,2-diacyl-sn-glycero-3-phospho-(1D-myo-inositol-3-phosphate) + phosphate. Phosphatidylinositol (PtdIns) phosphatase that specifically hydrolyzes the 5-phosphate of phosphatidylinositol-3,4,5-trisphosphate (PtdIns(3,4,5)P3), phosphatidylinositol 4,5-bisphosphate(PtdIns(4,5)P2) and phosphatidylinositol 3,5-bisphosphate (PtdIns(3,5)P2). Specific for lipid substrates, inactive towards water soluble inositol phosphates. Plays an essential role in the primary cilium by controlling ciliary growth and phosphoinositide 3-kinase (PI3K) signaling and stability. The chain is Phosphatidylinositol polyphosphate 5-phosphatase type IV (INPP5E) from Pan troglodytes (Chimpanzee).